Here is a 1233-residue protein sequence, read N- to C-terminus: ATP-dependent helicase/nuclease subunit A (1233 aa).

The UvrD-like helicase ATP-binding domain occupies 3–474; sequence TKWTEEQKQA…ILLYKNFRSR (472 aa). 24–31 contacts ATP; the sequence is AAAGSGKT. The UvrD-like helicase C-terminal domain occupies 518–809; that stretch reads VTGGAVELHL…RIMSIHKSKG (292 aa). A disordered region spans residues 533 to 555; that stretch reads VEEEVEEKEEEKNEEKDFEEEEE.

The protein belongs to the helicase family. AddA subfamily. As to quaternary structure, heterodimer of AddA and AddB/RexB. Requires Mg(2+) as cofactor.

It carries out the reaction Couples ATP hydrolysis with the unwinding of duplex DNA by translocating in the 3'-5' direction.. The enzyme catalyses ATP + H2O = ADP + phosphate + H(+). In terms of biological role, the heterodimer acts as both an ATP-dependent DNA helicase and an ATP-dependent, dual-direction single-stranded exonuclease. Recognizes the chi site generating a DNA molecule suitable for the initiation of homologous recombination. The AddA nuclease domain is required for chi fragment generation; this subunit has the helicase and 3' -&gt; 5' nuclease activities. This is ATP-dependent helicase/nuclease subunit A from Thermoanaerobacter sp. (strain X514).